The chain runs to 241 residues: MATNAKPIYQRILLKLSGEALQGAEGFGIDASVLDRMAQEVKELVELGIQVGVVIGGGNLFRGTGLAKAGMNRVVGDHMGMLATVMNGLAMRDALHRAYVNARLMSAIPLNGVCDNYSWAEAISLLRNNRVVIFAAGTGNPFFTTDSAACLRGIEIEAEAVLKATKVDGIFSADPVKHPDATLYDQLSYQDVLEKELKVMDLAAFTLARDHNLPIRVFNMNKPGALRRVVMGDKEGTLITK.

15 to 18 serves as a coordination point for ATP; sequence KLSG. The interval 23 to 28 is involved in allosteric activation by GTP; it reads GAEGFG. A UMP-binding site is contributed by G57. ATP-binding residues include G58 and R62. Residues D77 and 138-145 each bind UMP; that span reads TGNPFFTT. Residues T165, F171, and D174 each coordinate ATP.

Belongs to the UMP kinase family. In terms of assembly, homohexamer.

Its subcellular location is the cytoplasm. It catalyses the reaction UMP + ATP = UDP + ADP. Its pathway is pyrimidine metabolism; CTP biosynthesis via de novo pathway; UDP from UMP (UMPK route): step 1/1. Its activity is regulated as follows. Allosterically activated by GTP. Inhibited by UTP. Its function is as follows. Catalyzes the reversible phosphorylation of UMP to UDP. The chain is Uridylate kinase from Sodalis glossinidius (strain morsitans).